The chain runs to 400 residues: CCA-adding enzyme (400 aa).

ATP-binding residues include G28 and R31. Residues G28 and R31 each coordinate CTP. Mg(2+)-binding residues include D41 and D43. 5 residues coordinate ATP: R112, D155, R158, R161, and R164. The CTP site is built by R112, D155, R158, R161, and R164.

This sequence belongs to the tRNA nucleotidyltransferase/poly(A) polymerase family. Bacterial CCA-adding enzyme type 3 subfamily. In terms of assembly, homodimer. Requires Mg(2+) as cofactor.

The enzyme catalyses a tRNA precursor + 2 CTP + ATP = a tRNA with a 3' CCA end + 3 diphosphate. It catalyses the reaction a tRNA with a 3' CCA end + 2 CTP + ATP = a tRNA with a 3' CCACCA end + 3 diphosphate. Catalyzes the addition and repair of the essential 3'-terminal CCA sequence in tRNAs without using a nucleic acid template. Adds these three nucleotides in the order of C, C, and A to the tRNA nucleotide-73, using CTP and ATP as substrates and producing inorganic pyrophosphate. tRNA 3'-terminal CCA addition is required both for tRNA processing and repair. Also involved in tRNA surveillance by mediating tandem CCA addition to generate a CCACCA at the 3' terminus of unstable tRNAs. While stable tRNAs receive only 3'-terminal CCA, unstable tRNAs are marked with CCACCA and rapidly degraded. The chain is CCA-adding enzyme from Staphylococcus aureus (strain bovine RF122 / ET3-1).